We begin with the raw amino-acid sequence, 313 residues long: MRTLYPEITPYQQGSLKVDDRHTLYFEQCGNPHGKPVVMLHGGPGGGCNDKMRRFHDPAKYRIVLFDQRGSGRSTPHADLVDNTTWDLVADIERLRTHLGVDRWQVFGGSWGSTLALAYAADPSAAGHQLVLRGIFLLRRFELEWFYQEGASRLFPDAWEHYLNAIPPVERADLMSAFHRRLTSDDEATRLAAAKAWSVWEGATSFLHVDEDFVTGHEDAHFALAFARIENHYFVNGGFFEVEDQLLRDAHRIADIPGVIVHGRYDVVCPLQSAWDLHKAWPKAQLQISPASGHSAFEPENVDALVRATDGFA.

The region spanning 35-298 is the AB hydrolase-1 domain; sequence KPVVMLHGGP…SPASGHSAFE (264 aa). Catalysis depends on serine 110, which acts as the Nucleophile. Aspartate 266 is a catalytic residue. The Proton donor role is filled by histidine 294.

It belongs to the peptidase S33 family. Homooligomer.

Its subcellular location is the cytoplasm. It carries out the reaction Release of N-terminal proline from a peptide.. Its function is as follows. May be involved in proline metabolism and sensitivity to ascamycin. Has ascamycin dealanylating activity. The sequence is that of Proline iminopeptidase (pip) from Xanthomonas citri (Xanthomonas campestris pv. citri).